We begin with the raw amino-acid sequence, 1090 residues long: Protein CHROMATIN REMODELING 24 (1090 aa).

Disordered stretches follow at residues 1 to 51 and 247 to 273; these read MAEN…MIKL and VGKQNSYSGRHFDDNSEDNRQGYNLDR. Positions 44–51 match the Nuclear localization signal motif; it reads TKKSMIKL. The segment covering 256–273 has biased composition (basic and acidic residues); sequence RHFDDNSEDNRQGYNLDR. In terms of domain architecture, Helicase ATP-binding spans 389-564; that stretch reads WSLHTQGKGG…WALFNFSCPG (176 aa). 402-409 is an ATP binding site; it reads DDMGLGKT. Positions 515–518 match the DEAH box motif; sequence DEGH. The 160-residue stretch at 736–895 folds into the Helicase C-terminal domain; sequence FIMSLLENLI…IRYFSQQDLR (160 aa). Residues 1043-1069 adopt a coiled-coil conformation; the sequence is DGGAKIQKQIAELTRELKDMKAAERIN.

This sequence belongs to the SNF2/RAD54 helicase family.

Its subcellular location is the nucleus. DNA helicase that acts as an essential component of the spindle assembly checkpoint. Probable chromatin remodeling factor that regulate homologous recombination (HR) and non-homologous recombination (NHR). This Arabidopsis thaliana (Mouse-ear cress) protein is Protein CHROMATIN REMODELING 24.